The chain runs to 396 residues: CCA-adding enzyme (396 aa).

ATP-binding residues include G27 and R30. G27 and R30 together coordinate CTP. 2 residues coordinate Mg(2+): D40 and D42. Residues R111, D154, R157, R160, and R163 each coordinate ATP. The CTP site is built by R111, D154, R157, R160, and R163.

It belongs to the tRNA nucleotidyltransferase/poly(A) polymerase family. Bacterial CCA-adding enzyme type 3 subfamily. In terms of assembly, homodimer. Mg(2+) is required as a cofactor.

The catalysed reaction is a tRNA precursor + 2 CTP + ATP = a tRNA with a 3' CCA end + 3 diphosphate. It carries out the reaction a tRNA with a 3' CCA end + 2 CTP + ATP = a tRNA with a 3' CCACCA end + 3 diphosphate. Its function is as follows. Catalyzes the addition and repair of the essential 3'-terminal CCA sequence in tRNAs without using a nucleic acid template. Adds these three nucleotides in the order of C, C, and A to the tRNA nucleotide-73, using CTP and ATP as substrates and producing inorganic pyrophosphate. tRNA 3'-terminal CCA addition is required both for tRNA processing and repair. Also involved in tRNA surveillance by mediating tandem CCA addition to generate a CCACCA at the 3' terminus of unstable tRNAs. While stable tRNAs receive only 3'-terminal CCA, unstable tRNAs are marked with CCACCA and rapidly degraded. The chain is CCA-adding enzyme from Pediococcus pentosaceus (strain ATCC 25745 / CCUG 21536 / LMG 10740 / 183-1w).